A 338-amino-acid polypeptide reads, in one-letter code: D-erythrose-4-phosphate dehydrogenase (338 aa).

R11–I12 lines the NAD(+) pocket. Substrate-binding positions include S153–T155, R199, T212–K213, and R235. The active-site Nucleophile is C154. An NAD(+)-binding site is contributed by N317.

It belongs to the glyceraldehyde-3-phosphate dehydrogenase family. Epd subfamily. In terms of assembly, homotetramer.

It localises to the cytoplasm. It catalyses the reaction D-erythrose 4-phosphate + NAD(+) + H2O = 4-phospho-D-erythronate + NADH + 2 H(+). It participates in cofactor biosynthesis; pyridoxine 5'-phosphate biosynthesis; pyridoxine 5'-phosphate from D-erythrose 4-phosphate: step 1/5. Its function is as follows. Catalyzes the NAD-dependent conversion of D-erythrose 4-phosphate to 4-phosphoerythronate. The chain is D-erythrose-4-phosphate dehydrogenase from Shewanella loihica (strain ATCC BAA-1088 / PV-4).